Consider the following 40-residue polypeptide: Conotoxin Bt14.16 (40 aa).

Positions serine 1 to arginine 18 are excised as a propeptide. 2 disulfides stabilise this stretch: cysteine 21–cysteine 36 and cysteine 24–cysteine 29.

This sequence belongs to the conotoxin A superfamily. In terms of tissue distribution, expressed by the venom duct.

The protein localises to the secreted. Probable neurotoxin with unknown target. Possibly targets ion channels. The protein is Conotoxin Bt14.16 of Conus betulinus (Beech cone).